We begin with the raw amino-acid sequence, 61 residues long: Photosystem II assembly protein Psb34 (61 aa).

Residues 36 to 56 (LIMAAITVVLVAGLIAVAVVA) form a helical membrane-spanning segment.

This sequence belongs to the Psb34 family. In terms of assembly, part of the photosystem II (PSII) assembly intermediate RC47 complex (with D1, D2, CP47, PsbE, PsbF, PsbH, Psb27 and Psb28); minor amounts are found in other PSII complexes, including mature, dimeric PSII with PsbO and PsbV. No HliA or HliB are detected in any of these complexes. Its interaction with PSII requires both CP47 (psbB) and PsbH. HliA/HliB and Psb34 probably bind to a similar site on CP47; their binding seems to be mutually exclusive.

The protein resides in the cellular thylakoid membrane. Its function is as follows. Involved in photosystem II (PSII) assembly and/or repair. Probably involved in conversion of late PSII assembly intermediates into mature dimeric PSII, it may mediate the optimal equlibrium of HliA/HliB among the intermediates containing CP47 (psbB) to facilitate photoprotection during assembly. This is Photosystem II assembly protein Psb34 from Synechocystis sp. (strain ATCC 27184 / PCC 6803 / Kazusa).